Consider the following 325-residue polypeptide: Lipid droplet-associated hydrolase (325 aa).

Ser139 (nucleophile) is an active-site residue. Catalysis depends on charge relay system residues Asp271 and His300.

It belongs to the AB hydrolase superfamily. LDAH family.

The protein localises to the lipid droplet. It localises to the endoplasmic reticulum. It carries out the reaction a cholesterol ester + H2O = cholesterol + a fatty acid + H(+). In terms of biological role, probable serine lipid hydrolase associated with lipid droplets. Has low cholesterol esterase activity. Appears to lack triglyceride lipase activity. Involved in cholesterol and triglyceride homeostasis; stimulates cellular triglyceride accumulation and cellular cholesterol release. Acts antagonistically with PNPLA2/ATGL in regulation of cellular lipid stores. May regulate triglyceride accumulation indirectly through stimulation of PNPLA2/ATGL ubiquitination and proteasomal degradation. Promotes microtubule-dependent lipid droplet fusion. Highly expressed in macrophage-rich areas in atherosclerotic lesions, suggesting that it could promote cholesterol ester turnover in macrophages. The protein is Lipid droplet-associated hydrolase of Pongo abelii (Sumatran orangutan).